The sequence spans 4367 residues: Dynein heavy chain, cytoplasmic (4367 aa).

A compositionally biased stretch (pro residues) spans 1–13 (MMDSVPSPPPQPS). A disordered region spans residues 1 to 20 (MMDSVPSPPPQPSPDANGVA). The interval 1–1904 (MMDSVPSPPP…HIKMANAKLN (1904 aa)) is stem. 5 coiled-coil regions span residues 676-693 (ARQIERQLDQYMKKVEQV), 1176-1215 (IKFASRLGNRMREVYAELEKARKDLEGQAMTANSTAEAVR), 1327-1351 (LTHFEQRITKLQEESAMVAKAKEAL), 1557-1574 (YKEFEEEASSWEEKLNRV), and 1637-1668 (NIPNVQKSLERLAELLNKIQKALGEYLEKERV). AAA stretches follow at residues 1905-2130 (YGFE…VLVS), 2202-2460 (EAIR…FTVA), 2566-2815 (EVNT…WVRG), and 2909-3179 (TFCE…QGKI). 1943–1950 (GPAGTGKT) contributes to the ATP binding site. A coiled-coil region spans residues 2195-2218 (ASLEKLQEAIRRLAAERQLVVNDI). ATP contacts are provided by residues 2240-2247 (GNSGSGKS), 2605-2612 (GPPGSGKT), and 2947-2954 (GVSGSGKT). Coiled coils occupy residues 3193–3296 (QYVK…LARA), 3423–3481 (PLRE…SRVQ), and 3778–3809 (VIETLETLKTEAAEISAKMSNTEGVMAEVEQI). The stalk stretch occupies residues 3193-3481 (QYVKLYNEKR…AIKAEMSRVQ (289 aa)). AAA stretches follow at residues 3565-3794 (LSTA…EISA) and 4003-4215 (AERF…VIDT).

It belongs to the dynein heavy chain family. Consists of at least two heavy chains and a number of intermediate and light chains.

It localises to the cytoplasm. It is found in the cytoskeleton. Functionally, cytoplasmic dynein acts as a motor for the intracellular retrograde motility of vesicles and organelles along microtubules. Dynein has ATPase activity; the force-producing power stroke is thought to occur on release of ADP. Required to maintain uniform nuclear distribution in hyphae. This is Dynein heavy chain, cytoplasmic (ro-1) from Neurospora crassa (strain ATCC 24698 / 74-OR23-1A / CBS 708.71 / DSM 1257 / FGSC 987).